Consider the following 564-residue polypeptide: Proline--tRNA ligase (564 aa).

This sequence belongs to the class-II aminoacyl-tRNA synthetase family. ProS type 1 subfamily. Homodimer.

The protein resides in the cytoplasm. It carries out the reaction tRNA(Pro) + L-proline + ATP = L-prolyl-tRNA(Pro) + AMP + diphosphate. Its function is as follows. Catalyzes the attachment of proline to tRNA(Pro) in a two-step reaction: proline is first activated by ATP to form Pro-AMP and then transferred to the acceptor end of tRNA(Pro). As ProRS can inadvertently accommodate and process non-cognate amino acids such as alanine and cysteine, to avoid such errors it has two additional distinct editing activities against alanine. One activity is designated as 'pretransfer' editing and involves the tRNA(Pro)-independent hydrolysis of activated Ala-AMP. The other activity is designated 'posttransfer' editing and involves deacylation of mischarged Ala-tRNA(Pro). The misacylated Cys-tRNA(Pro) is not edited by ProRS. The polypeptide is Proline--tRNA ligase (Xanthomonas axonopodis pv. citri (strain 306)).